The chain runs to 428 residues: Histidine--tRNA ligase (428 aa).

The protein belongs to the class-II aminoacyl-tRNA synthetase family. As to quaternary structure, homodimer.

It is found in the cytoplasm. It carries out the reaction tRNA(His) + L-histidine + ATP = L-histidyl-tRNA(His) + AMP + diphosphate + H(+). The polypeptide is Histidine--tRNA ligase (Pseudomonas entomophila (strain L48)).